Reading from the N-terminus, the 494-residue chain is Probable malate:quinone oxidoreductase 3 (494 aa).

Belongs to the MQO family. FAD is required as a cofactor.

It carries out the reaction (S)-malate + a quinone = a quinol + oxaloacetate. The protein operates within carbohydrate metabolism; tricarboxylic acid cycle; oxaloacetate from (S)-malate (quinone route): step 1/1. This is Probable malate:quinone oxidoreductase 3 from Staphylococcus epidermidis (strain ATCC 12228 / FDA PCI 1200).